Here is a 302-residue protein sequence, read N- to C-terminus: Homoserine O-acetyltransferase (302 aa).

Cysteine 142 functions as the Acyl-thioester intermediate in the catalytic mechanism. Substrate contacts are provided by lysine 163 and serine 192. Histidine 235 functions as the Proton acceptor in the catalytic mechanism. Glutamate 237 is an active-site residue. A substrate-binding site is contributed by arginine 249.

It belongs to the MetA family.

The protein localises to the cytoplasm. It carries out the reaction L-homoserine + acetyl-CoA = O-acetyl-L-homoserine + CoA. Its pathway is amino-acid biosynthesis; L-methionine biosynthesis via de novo pathway; O-acetyl-L-homoserine from L-homoserine: step 1/1. Its function is as follows. Transfers an acetyl group from acetyl-CoA to L-homoserine, forming acetyl-L-homoserine. The polypeptide is Homoserine O-acetyltransferase (Clostridium novyi (strain NT)).